A 362-amino-acid chain; its full sequence is Aminomethyltransferase (362 aa).

It belongs to the GcvT family. As to quaternary structure, the glycine cleavage system is composed of four proteins: P, T, L and H.

It catalyses the reaction N(6)-[(R)-S(8)-aminomethyldihydrolipoyl]-L-lysyl-[protein] + (6S)-5,6,7,8-tetrahydrofolate = N(6)-[(R)-dihydrolipoyl]-L-lysyl-[protein] + (6R)-5,10-methylene-5,6,7,8-tetrahydrofolate + NH4(+). The glycine cleavage system catalyzes the degradation of glycine. The sequence is that of Aminomethyltransferase from Listeria innocua serovar 6a (strain ATCC BAA-680 / CLIP 11262).